Here is a 516-residue protein sequence, read N- to C-terminus: 3-ketoacyl-CoA synthase 4 (516 aa).

2 helical membrane-spanning segments follow: residues 48–68 and 87–107; these read LISN…SVEA and LVSI…YVMT. The region spanning 104–393 is the FAE domain; sequence YVMTRPRPVY…FFMTLVVKKL (290 aa). Residues Cys-248, His-327, His-411, His-415, His-444, and Asn-448 contribute to the active site.

It belongs to the thiolase-like superfamily. Chalcone/stilbene synthases family. In terms of tissue distribution, expressed at low levels in siliques, flowers, leaves and stems.

Its subcellular location is the membrane. It catalyses the reaction a very-long-chain acyl-CoA + malonyl-CoA + H(+) = a very-long-chain 3-oxoacyl-CoA + CO2 + CoA. Its pathway is lipid metabolism; fatty acid biosynthesis. In Arabidopsis thaliana (Mouse-ear cress), this protein is 3-ketoacyl-CoA synthase 4.